The sequence spans 353 residues: BLOC-1-related complex subunit 6 (353 aa).

Residues 23–194 (AIFGDGPGQT…SGAGGGRRAT (172 aa)) are disordered. A compositionally biased stretch (basic and acidic residues) spans 102-126 (FDLHGSSRRKDPEPPEAKPESERVC). Ser-130 and Ser-166 each carry phosphoserine. Residues 172–191 (GACGGPASSGGAESGAGGGR) are compositionally biased toward gly residues. Phosphothreonine is present on Thr-194. Ser-197 carries the post-translational modification Phosphoserine. The tract at residues 225-253 (LSGAPQPPPPAPTRPCSAPTPTPAIPPID) is disordered. Positions 229 to 253 (PQPPPPAPTRPCSAPTPTPAIPPID) are enriched in pro residues.

It belongs to the BORCS6 family. Component of the BLOC-one-related complex (BORC) which is composed of BLOC1S1, BLOC1S2, BORCS5, BORCS6, BORCS7, BORCS8, KXD1 and SNAPIN.

It localises to the lysosome membrane. As part of the BORC complex may play a role in lysosomes movement and localization at the cell periphery. Associated with the cytosolic face of lysosomes, the BORC complex may recruit ARL8B and couple lysosomes to microtubule plus-end-directed kinesin motor. The protein is BLOC-1-related complex subunit 6 of Bos taurus (Bovine).